The chain runs to 206 residues: Charged multivesicular body protein 6 (206 aa).

The N-myristoyl glycine moiety is linked to residue glycine 2. A coiled-coil region spans residues 11-103 (TRVTEQDRAV…AQIEMKVIEG (93 aa)). The disordered stretch occupies residues 167-206 (EADLELPEVPGEELPEVPEQEPVREKERVKKKPEREMVAV). Acidic residues predominate over residues 168–185 (ADLELPEVPGEELPEVPE). Residues 170–181 (LELPEVPGEELP) carry the Type-2 MIT-interacting motif motif. A compositionally biased stretch (basic and acidic residues) spans 187–206 (EPVREKERVKKKPEREMVAV).

This sequence belongs to the SNF7 family. In terms of assembly, probable core component of the endosomal sorting required for transport complex III (ESCRT-III). ESCRT-III components are thought to multimerize to form a flat lattice on the perimeter membrane of the endosome.

It localises to the endomembrane system. It is found in the late endosome membrane. Functionally, probable core component of the endosomal sorting required for transport complex III (ESCRT-III) which is involved in multivesicular bodies (MVBs) formation and sorting of endosomal cargo proteins into MVBs. MVBs contain intraluminal vesicles (ILVs) that are generated by invagination and scission from the limiting membrane of the endosome and mostly are delivered to lysosomes enabling degradation of membrane proteins, such as stimulated growth factor receptors, lysosomal enzymes and lipids. In the ESCRT-III complex, it probably serves as an acceptor for the ESCRT-II complex on endosomal membranes. The protein is Charged multivesicular body protein 6 (chmp6) of Danio rerio (Zebrafish).